The chain runs to 691 residues: Elongation factor G (691 aa).

Residues 8–282 (EKTRNIGIMA…AVVDYLPSPV (275 aa)) enclose the tr-type G domain. GTP contacts are provided by residues 17–24 (AHIDAGKT), 81–85 (DTPGH), and 135–138 (NKMD).

Belongs to the TRAFAC class translation factor GTPase superfamily. Classic translation factor GTPase family. EF-G/EF-2 subfamily.

Its subcellular location is the cytoplasm. Functionally, catalyzes the GTP-dependent ribosomal translocation step during translation elongation. During this step, the ribosome changes from the pre-translocational (PRE) to the post-translocational (POST) state as the newly formed A-site-bound peptidyl-tRNA and P-site-bound deacylated tRNA move to the P and E sites, respectively. Catalyzes the coordinated movement of the two tRNA molecules, the mRNA and conformational changes in the ribosome. The chain is Elongation factor G from Caldicellulosiruptor saccharolyticus (strain ATCC 43494 / DSM 8903 / Tp8T 6331).